The chain runs to 248 residues: L-seryl-tRNA(Sec) kinase (248 aa).

ATP is bound at residue 7 to 14 (GLPGVGKS).

This sequence belongs to the L-seryl-tRNA(Sec) kinase family.

The catalysed reaction is L-seryl-tRNA(Sec) + ATP = O-phospho-L-seryl-tRNA(Sec) + ADP. The protein operates within aminoacyl-tRNA biosynthesis; selenocysteinyl-tRNA(Sec) biosynthesis; selenocysteinyl-tRNA(Sec) from L-seryl-tRNA(Sec) (archaeal/eukaryal route): step 1/2. Functionally, specifically phosphorylates seryl-tRNA(Sec) to O-phosphoseryl-tRNA(Sec), an activated intermediate for selenocysteine biosynthesis. The protein is L-seryl-tRNA(Sec) kinase (pstK) of Methanocaldococcus jannaschii (strain ATCC 43067 / DSM 2661 / JAL-1 / JCM 10045 / NBRC 100440) (Methanococcus jannaschii).